A 225-amino-acid chain; its full sequence is N-(5'-phosphoribosyl)anthranilate isomerase (225 aa).

It belongs to the TrpF family.

The catalysed reaction is N-(5-phospho-beta-D-ribosyl)anthranilate = 1-(2-carboxyphenylamino)-1-deoxy-D-ribulose 5-phosphate. Its pathway is amino-acid biosynthesis; L-tryptophan biosynthesis; L-tryptophan from chorismate: step 3/5. In Nitrobacter hamburgensis (strain DSM 10229 / NCIMB 13809 / X14), this protein is N-(5'-phosphoribosyl)anthranilate isomerase.